A 180-amino-acid chain; its full sequence is Nucleoside-triphosphatase THEP1 (180 aa).

ATP contacts are provided by residues 18–25 (GRPGVGKT) and 104–111 (LVIMDEIG).

The protein belongs to the THEP1 NTPase family.

The enzyme catalyses a ribonucleoside 5'-triphosphate + H2O = a ribonucleoside 5'-diphosphate + phosphate + H(+). Its function is as follows. Has nucleotide phosphatase activity towards ATP, GTP, CTP, TTP and UTP. May hydrolyze nucleoside diphosphates with lower efficiency. This chain is Nucleoside-triphosphatase THEP1, found in Metallosphaera sedula (strain ATCC 51363 / DSM 5348 / JCM 9185 / NBRC 15509 / TH2).